The sequence spans 343 residues: Mating-type protein MAT-2 (343 aa).

Disordered regions lie at residues 98 to 117 and 177 to 223; these read RSPQ…SEQT and KKPW…AAMT. Positions 99–117 are enriched in low complexity; it reads SPQVVSSPQSAQTSPSEQT. A DNA-binding region (HMG box) is located at residues 131-199; it reads APRPMNCWII…EHLRQHPNYK (69 aa). Residues 206–218 are compositionally biased toward basic residues; sequence GEKKKRQSRKSKR.

The protein resides in the nucleus. In Cochliobolus heterostrophus (Southern corn leaf blight fungus), this protein is Mating-type protein MAT-2 (MAT2).